A 144-amino-acid chain; its full sequence is Probable calcium-binding protein CML31 (144 aa).

EF-hand domains are found at residues 1 to 31 (MAEIFESVDKNKDGKILWDEFAEAIRVFSPQ), 32 to 67 (ITSEEIDKMFIVLDVDGDGQIDDVEFASCLMVNGGG), 72 to 107 (EEEVVMKEAFDLYDMDGDGKISASEIHVVLKRLGEK), and 108 to 143 (HTMEDCVVMVQTVDKDSDGFVNFEEFKIMMNSNKES). Ca(2+) is bound by residues Asp-45, Asp-47, Asp-49, Gln-51, Glu-56, Asp-85, Asp-87, Asp-89, Lys-91, Glu-96, Asp-121, Asp-123, Asp-125, and Glu-132.

Potential calcium sensor. The protein is Probable calcium-binding protein CML31 (CML31) of Arabidopsis thaliana (Mouse-ear cress).